The chain runs to 299 residues: MKYSIPMKIPNQYQTNCLLKEITTFGIGGPAKYFVEVRTIPDMQKTLLFCYQNEIPYFILGKGSNSLFDDRGFNGLVIANRIDCLEKNEKGCWHVGAGYSFSLLGSQTARQGWEGLEFASGIPGSVGGAIFMNAGANGRETADNLISVDFVDEQGKLIHFKRSNLNFQYRTSPFQNIKGAIVSATFQLNASQEARQKQLSIIDYRKKTQPYKAKSAGCVFRNPNCGHAGALIEQAGLKETKIGGAAVSSVHANFIINSGLATSQDVLALIRLIQETVKAKTGAELESEIRYVPYDVNQG.

The region spanning 26-191 (GIGGPAKYFV…VSATFQLNAS (166 aa)) is the FAD-binding PCMH-type domain. R170 is a catalytic residue. Catalysis depends on C218, which acts as the Proton donor. E288 is a catalytic residue.

Belongs to the MurB family. It depends on FAD as a cofactor.

The protein localises to the cytoplasm. The catalysed reaction is UDP-N-acetyl-alpha-D-muramate + NADP(+) = UDP-N-acetyl-3-O-(1-carboxyvinyl)-alpha-D-glucosamine + NADPH + H(+). Its pathway is cell wall biogenesis; peptidoglycan biosynthesis. In terms of biological role, cell wall formation. In Protochlamydia amoebophila (strain UWE25), this protein is UDP-N-acetylenolpyruvoylglucosamine reductase.